Reading from the N-terminus, the 809-residue chain is WD repeat protein iqw1 (809 aa).

WD repeat units follow at residues 43 to 82 (GHTGCVNTLDWSADGEFLLSGSDDTRLIVWDVFNEYKPRH), 87 to 128 (GHVQ…EGGM), 141 to 180 (CALDSVKNIVPCDNGHTFLVCSEDGTARQYDIREPHVCNQ), 193 to 233 (PYRI…KSFR), and 241 to 295 (SPEK…LFHV). The segment at 599–644 (SMYTGHSDLNDDDDDYQDEESYSYASDDDDESDEDSDEGPTLLSLR) is disordered. Acidic residues predominate over residues 608–636 (NDDDDDYQDEESYSYASDDDDESDEDSDE). WD repeat units lie at residues 668-708 (CNVE…ILAI) and 711-750 (GDSEAVNVIEGHPRCPTLAVSGIDSTVKIFNTENTPPSGC).

In terms of assembly, interacts with ddb1.

The protein localises to the cytoplasm. In terms of biological role, ligand-dependent coactivator of nuclear receptors that may function as a substrate receptor for CUL4-DDB1 E3 ubiquitin-protein ligase complex. This is WD repeat protein iqw1 (iqw1) from Schizosaccharomyces pombe (strain 972 / ATCC 24843) (Fission yeast).